Here is a 651-residue protein sequence, read N- to C-terminus: PTS system sucrose-specific EIIBCA component (651 aa).

One can recognise a PTS EIIB type-1 domain in the interval 3–86 (HQEVADRVLN…IVKTGLKEVT (84 aa)). Cys25 acts as the Phosphocysteine intermediate; for EIIB activity in catalysis. Transmembrane regions (helical) follow at residues 109–129 (VLSD…LLMA), 158–178 (MINA…GFSA), 182–202 (FGGN…PSLV), 204–224 (GYSV…VFGL), 226–246 (VAQA…FILA), 264–284 (FTPM…VGPV), 303–323 (TGWI…ITGL), 345–365 (FIFP…LAIF), 404–424 (FVFA…FHVL), and 444–464 (IPAF…PTFI). The region spanning 121 to 481 (LVAGGLLMAL…DDRDQVKSPA (361 aa)) is the PTS EIIC type-1 domain. The 105-residue stretch at 510–614 (DQVFSAEIMG…DPTVMLIVTN (105 aa)) folds into the PTS EIIA type-1 domain. The Tele-phosphohistidine intermediate; for EIIA activity role is filled by His562.

The protein localises to the cell membrane. It carries out the reaction N(pros)-phospho-L-histidyl-[protein](out) + sucrose = sucrose 6(G)-phosphate(in) + L-histidyl-[protein]. In terms of biological role, the phosphoenolpyruvate-dependent sugar phosphotransferase system (sugar PTS), a major carbohydrate active transport system, catalyzes the phosphorylation of incoming sugar substrates concomitantly with their translocation across the cell membrane. This system is involved in sucrose transport. The protein is PTS system sucrose-specific EIIBCA component (scrA) of Pediococcus pentosaceus.